A 395-amino-acid polypeptide reads, in one-letter code: Phosphoglycerate kinase (395 aa).

Residues 21–23 (DFN), R36, 59–62 (HLGR), R120, and R153 contribute to the substrate site. ATP-binding positions include K203, E325, and 351-354 (GGDS).

Belongs to the phosphoglycerate kinase family. Monomer.

It localises to the cytoplasm. It catalyses the reaction (2R)-3-phosphoglycerate + ATP = (2R)-3-phospho-glyceroyl phosphate + ADP. It participates in carbohydrate degradation; glycolysis; pyruvate from D-glyceraldehyde 3-phosphate: step 2/5. The sequence is that of Phosphoglycerate kinase from Roseiflexus castenholzii (strain DSM 13941 / HLO8).